Consider the following 213-residue polypeptide: Octanoyltransferase (213 aa).

Residues 36–211 form the BPL/LPL catalytic domain; it reads TNTPDEIWLV…KFCQQLGFKL (176 aa). Substrate is bound by residues 75 to 82, 142 to 144, and 155 to 157; these read RGGQVTYH, SLG, and GLA. Residue C173 is the Acyl-thioester intermediate of the active site.

It belongs to the LipB family.

The protein resides in the cytoplasm. It carries out the reaction octanoyl-[ACP] + L-lysyl-[protein] = N(6)-octanoyl-L-lysyl-[protein] + holo-[ACP] + H(+). Its pathway is protein modification; protein lipoylation via endogenous pathway; protein N(6)-(lipoyl)lysine from octanoyl-[acyl-carrier-protein]: step 1/2. Its function is as follows. Catalyzes the transfer of endogenously produced octanoic acid from octanoyl-acyl-carrier-protein onto the lipoyl domains of lipoate-dependent enzymes. Lipoyl-ACP can also act as a substrate although octanoyl-ACP is likely to be the physiological substrate. This Photorhabdus laumondii subsp. laumondii (strain DSM 15139 / CIP 105565 / TT01) (Photorhabdus luminescens subsp. laumondii) protein is Octanoyltransferase.